The sequence spans 395 residues: Probable isocitrate dehydrogenase [NAD] gamma 2, mitochondrial (395 aa).

A mitochondrion-targeting transit peptide spans 1-25; sequence MLAAGSCSVRTILQPALLLGHSREV. A citrate-binding site is contributed by T117. Residues R133, R164, and D251 each coordinate substrate. D251 lines the Mn(2+) pocket. Position 321 (N321) interacts with ADP.

This sequence belongs to the isocitrate and isopropylmalate dehydrogenases family. In terms of assembly, heterooligomer of subunits alpha (IDH3A), beta (IDH3B), and gamma (IDH3G) in the apparent ratio of 2:1:1. The heterodimer containing one IDH3A and one IDH3B subunit and the heterodimer containing one IDH3A and one IDH3G subunit assemble into a heterotetramer (which contains two subunits of IDH3A, one of IDH3B and one of IDH3G) and further into the heterooctamer. The cofactor is Mg(2+). Requires Mn(2+) as cofactor.

The protein resides in the mitochondrion. The heterotetramer and the heterodimer composed of IDH3A and IDH3G subunits can be allosterically activated by citrate (CIT) or/and ADP, and the two activators can act independently or synergistically. The heterodimer composed of IDH3A and IDH3B subunits cannot be allosterically regulated and the allosteric regulation of the heterotetramer is through the IDH3G subunit and not the IDH3B subunit. The IDH3G subunit contains the allosteric site which consists of a CIT-binding site and an ADP-binding site, and the binding of CIT and ADP causes conformational changes at the allosteric site which are transmitted to the active site in the catalytic subunit (IDH3A) through a cascade of conformational changes at the heterodimer interface, leading to stabilization of the isocitrate-binding at the active site and thus activation of the enzyme. ATP can activate the heterotetramer and the heterodimer composed of IDH3A and IDH3G subunits at low concentrations but inhibits their activities at high concentrations, whereas ATP exhibits only inhibitory effect on the heterodimer composed of IDH3A and IDH3B subunits. Regulatory subunit which plays a role in the allosteric regulation of the enzyme catalyzing the decarboxylation of isocitrate (ICT) into alpha-ketoglutarate. The heterodimer composed of the alpha (IDH3A) and beta (IDH3B) subunits and the heterodimer composed of the alpha (IDH3A) and gamma (IDH3G) subunits, have considerable basal activity but the full activity of the heterotetramer (containing two subunits of IDH3A, one of IDH3B and one of IDH3G) requires the assembly and cooperative function of both heterodimers. The protein is Probable isocitrate dehydrogenase [NAD] gamma 2, mitochondrial of Rattus norvegicus (Rat).